The following is a 490-amino-acid chain: Aspartyl aminopeptidase 4 (490 aa).

A Zn(2+)-binding site is contributed by histidine 97. Histidine 173 provides a ligand contact to substrate. Zn(2+) contacts are provided by aspartate 273, glutamate 308, glutamate 309, and aspartate 362. Residue glutamate 308 participates in substrate binding. Residues aspartate 362, histidine 365, lysine 390, and tyrosine 397 each contribute to the substrate site. A Zn(2+)-binding site is contributed by histidine 456.

It belongs to the peptidase M18 family. Tetrahedron-shaped homododecamer built from six homodimers. Zn(2+) is required as a cofactor.

It is found in the cytoplasm. Its subcellular location is the vacuole lumen. The catalysed reaction is Release of an N-terminal aspartate or glutamate from a peptide, with a preference for aspartate.. Its activity is regulated as follows. The metalloproteases inhibitors EDTA and 1.10-phenanthroline both inhibit the activity, whereas bestatin, an inhibitor of most aminopeptidases, does not affect enzyme activity. Functionally, aspartyl aminopeptidase that contributes to peptide degradation both in the cytosol and the vacuole. Cells may respond to environmental conditions by changing the distributions of the cytosolic enzyme to the vacuole when cells need more active vacuolar degradation. This chain is Aspartyl aminopeptidase 4 (APE4), found in Saccharomyces cerevisiae (strain ATCC 204508 / S288c) (Baker's yeast).